The following is a 368-amino-acid chain: Cytochrome b (368 aa).

Helical transmembrane passes span 33 to 53, 77 to 99, 112 to 132, and 178 to 198; these read FGSL…FLAM, WLIR…THTG, TWMV…LGYV, and FYAL…MHII. 2 residues coordinate heme b: His-83 and His-97. The heme b site is built by His-182 and His-196. An a ubiquinone-binding site is contributed by His-201. The next 4 membrane-spanning stretches (helical) occupy residues 224-244, 288-308, 323-343, and 345-365; these read FSAK…SVVL, LGGV…PMMN, IAFW…SKPV, and SPFE…YMIM.

It belongs to the cytochrome b family. In terms of assembly, the main subunits of complex b-c1 are: cytochrome b, cytochrome c1 and the Rieske protein. Heme b serves as cofactor.

Its subcellular location is the mitochondrion inner membrane. Component of the ubiquinol-cytochrome c reductase complex (complex III or cytochrome b-c1 complex) that is part of the mitochondrial respiratory chain. The b-c1 complex mediates electron transfer from ubiquinol to cytochrome c. Contributes to the generation of a proton gradient across the mitochondrial membrane that is then used for ATP synthesis. This Bugula neritina (Brown bryozoan) protein is Cytochrome b (mt:Cyt-b).